Reading from the N-terminus, the 287-residue chain is MAEITAALVKELRERTGEGMMDCKKALTKAGGDIEKAIDDMRASGAIKAAKKAGNVAAEGAIAIKDDGKAAVIIEVNSQTDFLALQDDFKNFVAASVEKAFADKLTDVAPLIEAQETARLVLVGKVGENVNIRRLKRIEGDVVGSYLHGNKIGVVVTLKGGNVELAKDIAMHVAASNPEFLFPSEVSAEAIEREKSVFLQLNEDKIKGKPAEIVEKMVGGRITKFLAEASLVEQAFVKNPEIKVGDLAKKAGAEIVSFTYFKVGEGIEKPVDNFADEVAAQLAAAKQ.

An involved in Mg(2+) ion dislocation from EF-Tu region spans residues 80–83; the sequence is TDFL.

Belongs to the EF-Ts family.

It is found in the cytoplasm. Its function is as follows. Associates with the EF-Tu.GDP complex and induces the exchange of GDP to GTP. It remains bound to the aminoacyl-tRNA.EF-Tu.GTP complex up to the GTP hydrolysis stage on the ribosome. This chain is Elongation factor Ts, found in Pseudomonas syringae pv. tomato (strain ATCC BAA-871 / DC3000).